Reading from the N-terminus, the 300-residue chain is Acetylglutamate kinase (300 aa).

Substrate-binding positions include 73 to 74 (GG), Arg-95, and Asn-197.

Belongs to the acetylglutamate kinase family. ArgB subfamily.

It localises to the cytoplasm. The catalysed reaction is N-acetyl-L-glutamate + ATP = N-acetyl-L-glutamyl 5-phosphate + ADP. The protein operates within amino-acid biosynthesis; L-arginine biosynthesis; N(2)-acetyl-L-ornithine from L-glutamate: step 2/4. Its function is as follows. Catalyzes the ATP-dependent phosphorylation of N-acetyl-L-glutamate. The sequence is that of Acetylglutamate kinase from Bordetella pertussis (strain Tohama I / ATCC BAA-589 / NCTC 13251).